We begin with the raw amino-acid sequence, 25 residues long: Bifunctional chitinase/lysozyme (25 aa).

This sequence belongs to the glycosyl hydrolase 19 family. Chitinase class I subfamily. Monomer.

The protein localises to the secreted. It is found in the extracellular space. It catalyses the reaction Random endo-hydrolysis of N-acetyl-beta-D-glucosaminide (1-&gt;4)-beta-linkages in chitin and chitodextrins.. It carries out the reaction Hydrolysis of (1-&gt;4)-beta-linkages between N-acetylmuramic acid and N-acetyl-D-glucosamine residues in a peptidoglycan and between N-acetyl-D-glucosamine residues in chitodextrins.. Its function is as follows. Bifunctional enzyme with lysozyme/chitinase activity. This is Bifunctional chitinase/lysozyme from Carica papaya (Papaya).